We begin with the raw amino-acid sequence, 193 residues long: MKTSSLIAMRLIIFYLLSVVGRSTAAVEEAPASSLHIPRLNPLSSNLEYDEPSEKRAYAYISEYKRLPLYNFGIGKRWIDNSEDKRTRPFSFGIGKRLRDYRFGIGKRNSGYRPLGMDFSVDNMDFHSREDNLDDFIDDKRGGQPFSFGIGKRGWKLPMGEMAVSGRRLNDVVGPKYLLGLGKGLSENENLIQ.

Residues methionine 1 to alanine 25 form the signal peptide. The propeptide occupies alanine 26 to tyrosine 64. Isoleucine 74 is modified (isoleucine amide). Positions tryptophan 78 to aspartate 84 are excised as a propeptide. Isoleucine amide occurs at positions 94 and 105. Positions asparagine 109–aspartate 139 are excised as a propeptide. An Isoleucine amide modification is found at isoleucine 150. Serine 165 is modified (serine amide). A propeptide spanning residues leucine 169–glutamine 193 is cleaved from the precursor.

This sequence belongs to the allatostatin family. As to expression, allatostatins A1, A2 and A3 are expressed in brain, antennal lobes, optical lobes, gnathal ganglia, the retrocerebral complex and thoracic, abdominal and ventral ganglia. Allatostain A4 is expressed in brain (at protein level).

Its subcellular location is the secreted. Functionally, may act as a neurotransmitter or neuromodulator. In Camponotus floridanus (Florida carpenter ant), this protein is Allatostatin A.